Reading from the N-terminus, the 37-residue chain is Large ribosomal subunit protein bL36 (37 aa).

This sequence belongs to the bacterial ribosomal protein bL36 family.

This chain is Large ribosomal subunit protein bL36, found in Halorhodospira halophila (strain DSM 244 / SL1) (Ectothiorhodospira halophila (strain DSM 244 / SL1)).